The primary structure comprises 258 residues: uncharacterized protein (258 aa).

This is an uncharacterized protein from Caenorhabditis elegans.